Reading from the N-terminus, the 485-residue chain is Glutamyl-tRNA(Gln) amidotransferase subunit A (485 aa).

Active-site charge relay system residues include Lys-79 and Ser-154. Ser-178 serves as the catalytic Acyl-ester intermediate.

Belongs to the amidase family. GatA subfamily. Heterotrimer of A, B and C subunits.

It catalyses the reaction L-glutamyl-tRNA(Gln) + L-glutamine + ATP + H2O = L-glutaminyl-tRNA(Gln) + L-glutamate + ADP + phosphate + H(+). Its function is as follows. Allows the formation of correctly charged Gln-tRNA(Gln) through the transamidation of misacylated Glu-tRNA(Gln) in organisms which lack glutaminyl-tRNA synthetase. The reaction takes place in the presence of glutamine and ATP through an activated gamma-phospho-Glu-tRNA(Gln). This is Glutamyl-tRNA(Gln) amidotransferase subunit A from Geobacillus kaustophilus (strain HTA426).